The primary structure comprises 265 residues: Translation initiation factor 2 subunit alpha (265 aa).

An S1 motif domain is found at 12–82 (GELVIGTVKK…KMRVVEVSLK (71 aa)).

The protein belongs to the eIF-2-alpha family. As to quaternary structure, heterotrimer composed of an alpha, a beta and a gamma chain.

In terms of biological role, eIF-2 functions in the early steps of protein synthesis by forming a ternary complex with GTP and initiator tRNA. In Pyrobaculum aerophilum (strain ATCC 51768 / DSM 7523 / JCM 9630 / CIP 104966 / NBRC 100827 / IM2), this protein is Translation initiation factor 2 subunit alpha.